The primary structure comprises 289 residues: Probable endonuclease 4 (289 aa).

9 residues coordinate Zn(2+): H74, H115, E150, D184, H187, H218, D231, H233, and E263.

The protein belongs to the AP endonuclease 2 family. Requires Zn(2+) as cofactor.

The enzyme catalyses Endonucleolytic cleavage to 5'-phosphooligonucleotide end-products.. Endonuclease IV plays a role in DNA repair. It cleaves phosphodiester bonds at apurinic or apyrimidinic (AP) sites, generating a 3'-hydroxyl group and a 5'-terminal sugar phosphate. This chain is Probable endonuclease 4, found in Mycoplasma capricolum subsp. capricolum (strain California kid / ATCC 27343 / NCTC 10154).